The following is a 74-amino-acid chain: Fulgimotoxin (74 aa).

Residue Gln1 is modified to Pyrrolidone carboxylic acid. 5 disulfide bridges follow: Cys10/Cys34, Cys13/Cys21, Cys27/Cys51, Cys55/Cys66, and Cys67/Cys72.

Belongs to the three-finger toxin family. Ancestral subfamily. Boigatoxin sub-subfamily. As to quaternary structure, monomer. The N-terminus is blocked. Post-translationally, contains 5 disulfide bonds. As to expression, expressed by the venom gland.

Its subcellular location is the secreted. Functionally, reptile-specific three-finger toxin that is lethal at low doses for lizards, but not for mice. Probably acts as a neurotoxin. The polypeptide is Fulgimotoxin (Oxybelis fulgidus (Green vine snake)).